Consider the following 81-residue polypeptide: Large ribosomal subunit protein bL31B (81 aa).

It belongs to the bacterial ribosomal protein bL31 family. Type B subfamily. As to quaternary structure, part of the 50S ribosomal subunit.

This is Large ribosomal subunit protein bL31B from Bacillus cereus (strain ATCC 10987 / NRS 248).